Reading from the N-terminus, the 169-residue chain is SsrA-binding protein (169 aa).

It belongs to the SmpB family.

The protein localises to the cytoplasm. Required for rescue of stalled ribosomes mediated by trans-translation. Binds to transfer-messenger RNA (tmRNA), required for stable association of tmRNA with ribosomes. tmRNA and SmpB together mimic tRNA shape, replacing the anticodon stem-loop with SmpB. tmRNA is encoded by the ssrA gene; the 2 termini fold to resemble tRNA(Ala) and it encodes a 'tag peptide', a short internal open reading frame. During trans-translation Ala-aminoacylated tmRNA acts like a tRNA, entering the A-site of stalled ribosomes, displacing the stalled mRNA. The ribosome then switches to translate the ORF on the tmRNA; the nascent peptide is terminated with the 'tag peptide' encoded by the tmRNA and targeted for degradation. The ribosome is freed to recommence translation, which seems to be the essential function of trans-translation. This is SsrA-binding protein from Mycolicibacterium paratuberculosis (strain ATCC BAA-968 / K-10) (Mycobacterium paratuberculosis).